The following is a 656-amino-acid chain: Methylenetetrahydrofolate reductase (NADPH) (656 aa).

Polar residues predominate over residues 1–12 (MVNEARGNSSLN). Residues 1–44 (MVNEARGNSSLNPCLEGSASSGSESSKDSSRCSTPGLDPERHER) are disordered. Phosphoserine is present on residues S9, S10, S18, S20, S21, S23, S25, S26, S29, and S30. The residue at position 34 (T34) is a Phosphothreonine. The active-site Proton donor/acceptor is E63. 63 to 68 (EFFPPR) is a binding site for NAD(+). Phosphotyrosine is present on Y90. T94 bears the Phosphothreonine mark. 94–95 (TW) is a binding site for NAD(+). 94–95 (TW) serves as a coordination point for FAD. Residue S103 is modified to Phosphoserine. FAD-binding positions include H127, 157 to 159 (RGD), 174 to 175 (YA), Y197, 201 to 204 (HPEA), D210, and K217. D159 contacts substrate. Residues Q228, Y321, and R325 each coordinate substrate. The residue at position 394 (S394) is a Phosphoserine. Residue T451 is modified to Phosphothreonine. S-adenosyl-L-methionine-binding positions include N456, 461-464 (AAET), 481-485 (TINSQ), T560, and T573.

Belongs to the methylenetetrahydrofolate reductase family. In terms of assembly, homodimer. FAD serves as cofactor. Post-translationally, phosphorylation of an N-terminal serine-rich phosphorylation region increases sensitivity to S-adenosylmethionine and inhibition.

It catalyses the reaction (6S)-5-methyl-5,6,7,8-tetrahydrofolate + NADP(+) = (6R)-5,10-methylene-5,6,7,8-tetrahydrofolate + NADPH + H(+). Its pathway is one-carbon metabolism; tetrahydrofolate interconversion. Allosterically regulated by S-adenosylmethionine (SAM). Functionally, catalyzes the conversion of 5,10-methylenetetrahydrofolate to 5-methyltetrahydrofolate, a cosubstrate for homocysteine remethylation to methionine. Represents a key regulatory connection between the folate and methionine cycles. This is Methylenetetrahydrofolate reductase (NADPH) from Homo sapiens (Human).